The following is a 210-amino-acid chain: Cytochrome c biogenesis ATP-binding export protein CcmA (210 aa).

In terms of domain architecture, ABC transporter spans 3 to 205 (LHLQAAGLAC…KPSGYRELNL (203 aa)). Position 37–44 (37–44 (GPNGSGKT)) interacts with ATP.

Belongs to the ABC transporter superfamily. CcmA exporter (TC 3.A.1.107) family. The complex is composed of two ATP-binding proteins (CcmA) and two transmembrane proteins (CcmB).

It is found in the cell inner membrane. It carries out the reaction heme b(in) + ATP + H2O = heme b(out) + ADP + phosphate + H(+). In terms of biological role, part of the ABC transporter complex CcmAB involved in the biogenesis of c-type cytochromes; once thought to export heme, this seems not to be the case, but its exact role is uncertain. Responsible for energy coupling to the transport system. The chain is Cytochrome c biogenesis ATP-binding export protein CcmA from Pseudomonas putida (strain GB-1).